A 139-amino-acid chain; its full sequence is Cellular retinoic acid-binding protein 2 (139 aa).

Residues 21-31 (KALGVNMMMRK) carry the Nuclear localization signal motif. A Glycyl lysine isopeptide (Lys-Gly) (interchain with G-Cter in SUMO) cross-link involves residue K103. 134–136 (RVY) serves as a coordination point for all-trans-retinoate.

The protein belongs to the calycin superfamily. Fatty-acid binding protein (FABP) family. As to quaternary structure, interacts with importin alpha, RXR and RARA. Sumoylated in response to retinoic acid binding, sumoylation is critical for dissociation from ER and subsequent nuclear translocation.

Its subcellular location is the cytoplasm. The protein localises to the endoplasmic reticulum. It localises to the nucleus. Transports retinoic acid to the nucleus. Regulates the access of retinoic acid to the nuclear retinoic acid receptors. This is Cellular retinoic acid-binding protein 2 (Crabp2) from Rattus norvegicus (Rat).